The chain runs to 915 residues: Protein translocase subunit SecA (915 aa).

ATP-binding positions include Gln87, 105-109 (GEGKT), and Asp512. The segment at 881-915 (LPGTAPVRPEPKIGRNEPCPCGSGKKYKHCHGQLN) is disordered. The Zn(2+) site is built by Cys899, Cys901, Cys910, and His911. A compositionally biased stretch (basic residues) spans 905-915 (KKYKHCHGQLN).

Belongs to the SecA family. In terms of assembly, monomer and homodimer. Part of the essential Sec protein translocation apparatus which comprises SecA, SecYEG and auxiliary proteins SecDF-YajC and YidC. Requires Zn(2+) as cofactor.

It localises to the cell inner membrane. The protein localises to the cytoplasm. The enzyme catalyses ATP + H2O + cellular proteinSide 1 = ADP + phosphate + cellular proteinSide 2.. Part of the Sec protein translocase complex. Interacts with the SecYEG preprotein conducting channel. Has a central role in coupling the hydrolysis of ATP to the transfer of proteins into and across the cell membrane, serving both as a receptor for the preprotein-SecB complex and as an ATP-driven molecular motor driving the stepwise translocation of polypeptide chains across the membrane. This Azotobacter vinelandii (strain DJ / ATCC BAA-1303) protein is Protein translocase subunit SecA.